The primary structure comprises 153 residues: Endoribonuclease YbeY (153 aa).

Zn(2+) contacts are provided by histidine 119, histidine 123, and histidine 129.

Belongs to the endoribonuclease YbeY family. The cofactor is Zn(2+).

It is found in the cytoplasm. In terms of biological role, single strand-specific metallo-endoribonuclease involved in late-stage 70S ribosome quality control and in maturation of the 3' terminus of the 16S rRNA. The chain is Endoribonuclease YbeY from Desulforamulus reducens (strain ATCC BAA-1160 / DSM 100696 / MI-1) (Desulfotomaculum reducens).